A 663-amino-acid chain; its full sequence is DNA topoisomerase 1 (663 aa).

In terms of domain architecture, Toprim spans 4-137 (SWLIITEKDN…TVKVDRVRYS (134 aa)). Mg(2+)-binding residues include Glu-10 and Asp-106. The Topo IA-type catalytic domain occupies 155 to 558 (DFNLANAALA…ESREMLLQIL (404 aa)). The segment at 193-198 (SVGRVQ) is interaction with DNA. The active-site O-(5'-phospho-DNA)-tyrosine intermediate is the Tyr-306. The segment at 583–610 (CPECGGELVVRQSKAGKRFIGCSNYPDC) adopts a C4-type 1 zinc-finger fold. The segment at 629-653 (CKEHEIKEVKIRTKKGYWNLGCPYC) adopts a C4-type 2; atypical zinc-finger fold.

This sequence belongs to the type IA topoisomerase family. In terms of assembly, monomer. The cofactor is Mg(2+).

The enzyme catalyses ATP-independent breakage of single-stranded DNA, followed by passage and rejoining.. Releases the supercoiling and torsional tension of DNA, which is introduced during the DNA replication and transcription, by transiently cleaving and rejoining one strand of the DNA duplex. Introduces a single-strand break via transesterification at a target site in duplex DNA. The scissile phosphodiester is attacked by the catalytic tyrosine of the enzyme, resulting in the formation of a DNA-(5'-phosphotyrosyl)-enzyme intermediate and the expulsion of a 3'-OH DNA strand. The free DNA strand then undergoes passage around the unbroken strand, thus removing DNA supercoils. Finally, in the religation step, the DNA 3'-OH attacks the covalent intermediate to expel the active-site tyrosine and restore the DNA phosphodiester backbone. This is DNA topoisomerase 1 from Archaeoglobus fulgidus (strain ATCC 49558 / DSM 4304 / JCM 9628 / NBRC 100126 / VC-16).